A 338-amino-acid polypeptide reads, in one-letter code: Oligopeptide transport ATP-binding protein OppD (338 aa).

Residues 7–257 (LEAKQVSVAF…PKHPYTRSLL (251 aa)) enclose the ABC transporter domain. Residue 43–50 (GESGSGKS) coordinates ATP.

The protein belongs to the ABC transporter superfamily. As to quaternary structure, the complex is composed of two ATP-binding proteins (OppD and OppF), two transmembrane proteins (OppB and OppC) and a solute-binding protein (OppA).

Its subcellular location is the cell membrane. It catalyses the reaction a [peptide](out) + ATP + H2O = a [peptide](in) + ADP + phosphate + H(+). Part of the ABC transporter complex OppABCDF involved in the uptake of oligopeptides. Probably responsible for energy coupling to the transport system. Essential for uptake of peptides larger than three amino acids and for growth in milk. The protein is Oligopeptide transport ATP-binding protein OppD of Lactococcus lactis subsp. cremoris (strain SK11).